The sequence spans 150 residues: 3-dehydroquinate dehydratase (150 aa).

Residue Tyr-26 is the Proton acceptor of the active site. Substrate contacts are provided by Asn-77, His-83, and Asp-90. His-103 (proton donor) is an active-site residue. Substrate-binding positions include 104-105 and Arg-114; that span reads IS.

This sequence belongs to the type-II 3-dehydroquinase family. Homododecamer.

It catalyses the reaction 3-dehydroquinate = 3-dehydroshikimate + H2O. The protein operates within metabolic intermediate biosynthesis; chorismate biosynthesis; chorismate from D-erythrose 4-phosphate and phosphoenolpyruvate: step 3/7. Functionally, catalyzes a trans-dehydration via an enolate intermediate. The protein is 3-dehydroquinate dehydratase of Buchnera aphidicola subsp. Acyrthosiphon pisum (strain 5A).